Reading from the N-terminus, the 94-residue chain is Co-chaperonin GroES (94 aa).

This sequence belongs to the GroES chaperonin family. As to quaternary structure, heptamer of 7 subunits arranged in a ring. Interacts with the chaperonin GroEL.

It is found in the cytoplasm. Together with the chaperonin GroEL, plays an essential role in assisting protein folding. The GroEL-GroES system forms a nano-cage that allows encapsulation of the non-native substrate proteins and provides a physical environment optimized to promote and accelerate protein folding. GroES binds to the apical surface of the GroEL ring, thereby capping the opening of the GroEL channel. This Tetragenococcus halophilus (Pediococcus halophilus) protein is Co-chaperonin GroES.